Consider the following 170-residue polypeptide: Large ribosomal subunit protein uL11 (170 aa).

Belongs to the universal ribosomal protein uL11 family. In terms of assembly, part of the ribosomal stalk of the 50S ribosomal subunit. Interacts with L10 and the large rRNA to form the base of the stalk. L10 forms an elongated spine to which L12 dimers bind in a sequential fashion forming a multimeric L10(L12)X complex.

Forms part of the ribosomal stalk which helps the ribosome interact with GTP-bound translation factors. This is Large ribosomal subunit protein uL11 from Desulfurococcus amylolyticus (strain DSM 18924 / JCM 16383 / VKM B-2413 / 1221n) (Desulfurococcus kamchatkensis).